The chain runs to 660 residues: MKAIVFAYHDIGCVGLKALEKAGFDIQAVFTHTDDPNENHFFSSVARVSAEMGLTVFAPENVNHPLWIERIREMKPDVIFSFYYRHMLSDEILNLAPKGAFNLHGSLLPKYRGRAPINWAIVNGETETGVTLHKMTAKADAGDIVAQEKVTIEDTDTSLILHEKVREAAAKLMAHTLPHIASGNYSTTAQDESQATYYGRRCADDGLIDWNADAKTVHNLVRAVTEPYPGAFTFLGERKMIIWRARPVADNQGKRPGTVISTEPLVIACAKGAIEVITGQSENGLYVQGSRLATEMGIVTDVRVGPKATAQVKRRQRVLILGVNGFIGNHLTERLLKDGNYDIYGMDIGSSAIERFIGNPRFHFIEGDVSIHTEWIEYHIKKCDVILPLVAIATPIEYTRNPLRVFELDFEENLKIVRYCVKYNKRIIFPSTSEVYGMCDDKEFDEDNSRLIVGPINKQRWIYSVSKQLLDRVIWAYGAKEGLKFTLFRPFNWMGPRLDNLNSARIGSSRAITQLILNLVEGSPIKLVDGGEQKRCFTDINDGIEALFRIIENRDNKCDGQIINIGNPTNEASIRELAEMLLDCFEKHELRGHFPPFAGFKKIESSSYYGKGYQDVEHRKPSIKNAERLLDWKPTIETRQTVEETLDFFLRGAVEELGNK.

The segment at 1–304 (MKAIVFAYHD…EMGIVTDVRV (304 aa)) is formyltransferase ArnAFT. The Proton donor; for formyltransferase activity role is filled by histidine 104. (6R)-10-formyltetrahydrofolate contacts are provided by residues arginine 114 and 136–140 (TAKAD). The tract at residues 314–660 (RRQRVLILGV…RGAVEELGNK (347 aa)) is dehydrogenase ArnADH. NAD(+) contacts are provided by residues aspartate 347 and 368-369 (DV). UDP-alpha-D-glucuronate-binding positions include alanine 393, tyrosine 398, and 432 to 433 (TS). Glutamate 434 acts as the Proton acceptor; for decarboxylase activity in catalysis. UDP-alpha-D-glucuronate is bound by residues arginine 460, asparagine 492, 526–535 (KLVDGGEQKR), and tyrosine 613. Arginine 619 (proton donor; for decarboxylase activity) is an active-site residue.

The protein in the N-terminal section; belongs to the Fmt family. UDP-L-Ara4N formyltransferase subfamily. It in the C-terminal section; belongs to the NAD(P)-dependent epimerase/dehydratase family. UDP-glucuronic acid decarboxylase subfamily. In terms of assembly, homohexamer, formed by a dimer of trimers.

The catalysed reaction is UDP-alpha-D-glucuronate + NAD(+) = UDP-beta-L-threo-pentopyranos-4-ulose + CO2 + NADH. It carries out the reaction UDP-4-amino-4-deoxy-beta-L-arabinose + (6R)-10-formyltetrahydrofolate = UDP-4-deoxy-4-formamido-beta-L-arabinose + (6S)-5,6,7,8-tetrahydrofolate + H(+). Its pathway is nucleotide-sugar biosynthesis; UDP-4-deoxy-4-formamido-beta-L-arabinose biosynthesis; UDP-4-deoxy-4-formamido-beta-L-arabinose from UDP-alpha-D-glucuronate: step 1/3. The protein operates within nucleotide-sugar biosynthesis; UDP-4-deoxy-4-formamido-beta-L-arabinose biosynthesis; UDP-4-deoxy-4-formamido-beta-L-arabinose from UDP-alpha-D-glucuronate: step 3/3. It functions in the pathway bacterial outer membrane biogenesis; lipopolysaccharide biosynthesis. Bifunctional enzyme that catalyzes the oxidative decarboxylation of UDP-glucuronic acid (UDP-GlcUA) to UDP-4-keto-arabinose (UDP-Ara4O) and the addition of a formyl group to UDP-4-amino-4-deoxy-L-arabinose (UDP-L-Ara4N) to form UDP-L-4-formamido-arabinose (UDP-L-Ara4FN). The modified arabinose is attached to lipid A and is required for resistance to polymyxin and cationic antimicrobial peptides. This chain is Bifunctional polymyxin resistance protein ArnA, found in Proteus mirabilis (strain HI4320).